A 184-amino-acid polypeptide reads, in one-letter code: Large ribosomal subunit protein uL6 (184 aa).

This sequence belongs to the universal ribosomal protein uL6 family. In terms of assembly, part of the 50S ribosomal subunit.

This protein binds to the 23S rRNA, and is important in its secondary structure. It is located near the subunit interface in the base of the L7/L12 stalk, and near the tRNA binding site of the peptidyltransferase center. The sequence is that of Large ribosomal subunit protein uL6 from Cytophaga hutchinsonii (strain ATCC 33406 / DSM 1761 / CIP 103989 / NBRC 15051 / NCIMB 9469 / D465).